The chain runs to 336 residues: Fructose-1,6-bisphosphatase class 1 (336 aa).

Mg(2+) is bound by residues Glu90, Asp112, Leu114, and Asp115. Substrate is bound by residues 115-118, Asn207, and Lys273; that span reads DGSS. Glu279 is a binding site for Mg(2+).

The protein belongs to the FBPase class 1 family. In terms of assembly, homotetramer. Mg(2+) is required as a cofactor.

It is found in the cytoplasm. It catalyses the reaction beta-D-fructose 1,6-bisphosphate + H2O = beta-D-fructose 6-phosphate + phosphate. It participates in carbohydrate biosynthesis; gluconeogenesis. This chain is Fructose-1,6-bisphosphatase class 1, found in Xanthomonas oryzae pv. oryzae (strain PXO99A).